Consider the following 300-residue polypeptide: GTPase Era (300 aa).

The Era-type G domain maps to Arg8–Glu176. A G1 region spans residues Gly16–Ser23. Gly16 to Ser23 is a binding site for GTP. Residues Gln42–His46 are G2. The tract at residues Asp63 to Gly66 is G3. Residues Asp63–Met67 and Asn125–Asp128 each bind GTP. Positions Asn125–Asp128 are G4. The G5 stretch occupies residues Ile155 to Ala157. Residues Val199–Gly283 form the KH type-2 domain.

Belongs to the TRAFAC class TrmE-Era-EngA-EngB-Septin-like GTPase superfamily. Era GTPase family. Monomer.

The protein localises to the cytoplasm. Its subcellular location is the cell inner membrane. Its function is as follows. An essential GTPase that binds both GDP and GTP, with rapid nucleotide exchange. Plays a role in 16S rRNA processing and 30S ribosomal subunit biogenesis and possibly also in cell cycle regulation and energy metabolism. The polypeptide is GTPase Era (Pseudomonas putida (strain ATCC 700007 / DSM 6899 / JCM 31910 / BCRC 17059 / LMG 24140 / F1)).